The following is a 512-amino-acid chain: Glutathione-binding protein GsiB (512 aa).

Positions 1 to 26 (MARAVHRSGLVALGIVTALMASCAFA) are cleaved as a signal peptide.

This sequence belongs to the bacterial solute-binding protein 5 family. The complex is composed of two ATP-binding proteins (GsiA), two transmembrane proteins (GsiC and GsiD) and a solute-binding protein (GsiB).

The protein resides in the periplasm. Part of the ABC transporter complex GsiABCD involved in glutathione import. Binds glutathione. This is Glutathione-binding protein GsiB from Shigella dysenteriae serotype 1 (strain Sd197).